The sequence spans 600 residues: DNA polymerase alpha subunit B (600 aa).

The segment at 112 to 167 (AYTTPSKGPHKRVSSTPETPLTKRSISTRSPHQLLSPSSFSPSATPSQKYSSRTNR) is disordered. A compositionally biased stretch (polar residues) spans 125–140 (SSTPETPLTKRSISTR). Residue S126 is modified to Phosphoserine. Phosphothreonine occurs at positions 127 and 130. Phosphoserine occurs at positions 141, 147, 152, and 154. Positions 141–158 (SPHQLLSPSSFSPSATPS) are enriched in low complexity.

Belongs to the DNA polymerase alpha subunit B family. In terms of assembly, component of the alpha DNA polymerase complex (also known as the alpha DNA polymerase-primase complex) consisting of four subunits: the catalytic subunit POLA1, the regulatory subunit POLA2, and the primase complex subunits PRIM1 and PRIM2 respectively. Within the complex, POLA1 directly interacts with PRIM2. Phosphorylated in a cell cycle-dependent manner, in G2/M phase.

The protein resides in the nucleus. Its function is as follows. Accessory subunit of the DNA polymerase alpha complex (also known as the alpha DNA polymerase-primase complex) which plays an essential role in the initiation of DNA synthesis. During the S phase of the cell cycle, the DNA polymerase alpha complex (composed of a catalytic subunit POLA1, an accessory subunit POLA2 and two primase subunits, the catalytic subunit PRIM1 and the regulatory subunit PRIM2) is recruited to DNA at the replicative forks via direct interactions with MCM10 and WDHD1. The primase subunit of the polymerase alpha complex initiates DNA synthesis by oligomerising short RNA primers on both leading and lagging strands. These primers are initially extended by the polymerase alpha catalytic subunit and subsequently transferred to polymerase delta and polymerase epsilon for processive synthesis on the lagging and leading strand, respectively. This is DNA polymerase alpha subunit B (Pola2) from Rattus norvegicus (Rat).